Reading from the N-terminus, the 1084-residue chain is Probable sucrose-phosphate synthase 1 (1084 aa).

Residues Gly25–Val46 show a composition bias toward gly residues. A disordered region spans residues Gly25 to Pro61. Residues Pro48–Pro61 show a composition bias toward low complexity.

This sequence belongs to the glycosyltransferase 1 family. As to quaternary structure, homodimer or homotetramer. In terms of tissue distribution, expressed in leaves mesophyll cells, scutellum of germinating seedlings and pollen of immature inflorescences.

The enzyme catalyses beta-D-fructose 6-phosphate + UDP-alpha-D-glucose = sucrose 6(F)-phosphate + UDP + H(+). The protein operates within glycan biosynthesis; sucrose biosynthesis; sucrose from D-fructose 6-phosphate and UDP-alpha-D-glucose: step 1/2. Activity is regulated by phosphorylation and moderated by concentration of metabolites and light. Functionally, plays a role in photosynthetic sucrose synthesis by catalyzing the rate-limiting step of sucrose biosynthesis from UDP-glucose and fructose- 6-phosphate. Involved in the regulation of carbon partitioning in the leaves of plants. May regulate the synthesis of sucrose and therefore play a major role as a limiting factor in the export of photoassimilates out of the leaf. Plays a role for sucrose availability that is essential for plant growth and fiber elongation. This Oryza sativa subsp. indica (Rice) protein is Probable sucrose-phosphate synthase 1 (SPS1).